The primary structure comprises 149 residues: Large ribosomal subunit protein bL20m (149 aa).

The N-terminal 9 residues, 1–9, are a transit peptide targeting the mitochondrion; sequence MVFLTTRLW.

Belongs to the bacterial ribosomal protein bL20 family. As to quaternary structure, component of the mitochondrial ribosome large subunit (39S) which comprises a 16S rRNA and about 50 distinct proteins. Interacts with OXA1L.

It localises to the mitochondrion. This is Large ribosomal subunit protein bL20m (Mrpl20) from Mus musculus (Mouse).